We begin with the raw amino-acid sequence, 284 residues long: Riboflavin transporter (284 aa).

2 consecutive EamA domains span residues 2–129 and 141–273; these read VAAC…LIII and LLPI…SLYL. 8 helical membrane passes run 26 to 46, 58 to 78, 82 to 102, 115 to 135, 136 to 156, 167 to 187, 195 to 215, and 247 to 267; these read SVIIAFWQYVIALVLTLPLLV, FGLHVMRVALAAAGVQVWIYA, VPIWQVVALSMTSPFFVILCA, LLTTFTGFIGALIIIAPWSDS, YTVYSLLPILAAALWAGYSVM, ASISAYMLVLLTPINAALWLA, ITAPDVEIWSILIVIGAFTAL, and GWIVFAAAPSINFWPGAALII.

This sequence belongs to the drug/metabolite transporter (DMT) superfamily. 10 TMS drug/metabolite exporter (DME) (TC 2.A.7.3) family.

The protein resides in the cell membrane. Transports riboflavin into the cell. The chain is Riboflavin transporter from Brucella anthropi (strain ATCC 49188 / DSM 6882 / CCUG 24695 / JCM 21032 / LMG 3331 / NBRC 15819 / NCTC 12168 / Alc 37) (Ochrobactrum anthropi).